Here is a 204-residue protein sequence, read N- to C-terminus: UPF0637 protein USA300HOU_1046.1 (204 aa).

This sequence belongs to the UPF0637 family.

The polypeptide is UPF0637 protein USA300HOU_1046.1 (Staphylococcus aureus (strain USA300 / TCH1516)).